The primary structure comprises 344 residues: Dihydroorotate dehydrogenase (quinone) (344 aa).

FMN-binding positions include 64–68 (AGLDK) and Thr88. Lys68 is a binding site for substrate. 113 to 117 (NRMGF) provides a ligand contact to substrate. FMN contacts are provided by Asn144 and Asn177. Asn177 contributes to the substrate binding site. Ser180 serves as the catalytic Nucleophile. Asn182 is a binding site for substrate. Residues Lys222 and Thr250 each contribute to the FMN site. Residue 251–252 (NT) coordinates substrate. FMN contacts are provided by residues Gly273, Gly302, and 323–324 (YS).

It belongs to the dihydroorotate dehydrogenase family. Type 2 subfamily. Monomer. The cofactor is FMN.

Its subcellular location is the cell membrane. It carries out the reaction (S)-dihydroorotate + a quinone = orotate + a quinol. Its pathway is pyrimidine metabolism; UMP biosynthesis via de novo pathway; orotate from (S)-dihydroorotate (quinone route): step 1/1. Catalyzes the conversion of dihydroorotate to orotate with quinone as electron acceptor. In Polynucleobacter asymbioticus (strain DSM 18221 / CIP 109841 / QLW-P1DMWA-1) (Polynucleobacter necessarius subsp. asymbioticus), this protein is Dihydroorotate dehydrogenase (quinone).